Here is an 885-residue protein sequence, read N- to C-terminus: Chromatin structure-remodeling complex protein RSC3 (885 aa).

A DNA-binding region (zn(2)-C6 fungal-type) is located at residues 14–42 (CVQCRKRKIGCDRVKPICGNCMKHNKMDC). 2 positions are modified to phosphoserine: Ser-95 and Ser-236.

As to quaternary structure, forms a heteromer with RSC30. Interacts with LDB7 and NPL6. Component of the two forms of the RSC complex composed of at least either RSC1 or RSC2, and ARP7, ARP9, LDB7, NPL6, RSC3, RSC30, RSC4, RSC58, RSC6, RSC8, RSC9, SFH1, STH1, HTL1 and probably RTT102. The complexes interact with histone and histone variant components of centromeric chromatin. Component of a fungal-specific module (HTL1-LDB7-NPL6-RSC3-RSC30) within the RSC complex.

The protein resides in the nucleus. Its function is as follows. Component of the chromatin structure-remodeling complex (RSC), which is involved in transcription regulation and nucleosome positioning. RSC is responsible for the transfer of a histone octamer from a nucleosome core particle to naked DNA. The reaction requires ATP and involves an activated RSC-nucleosome intermediate. Remodeling reaction also involves DNA translocation, DNA twist and conformational change. As a reconfigurer of centromeric and flanking nucleosomes, RSC complex is required both for proper kinetochore function in chromosome segregation and, via a PKC1-dependent signaling pathway, for organization of the cellular cytoskeleton. This subunit is required for transcription of ribosomal protein genes and genes involved in the integrity of the cell wall, and also for proper metaphase progression. Together with HTL1, LDB7, NPL6, RSC30 components, defines a fungal-specific module within the RSC complex that plays a role in many cellular functions including the maintenance of cell wall integrity. This is Chromatin structure-remodeling complex protein RSC3 (RSC3) from Saccharomyces cerevisiae (strain ATCC 204508 / S288c) (Baker's yeast).